The sequence spans 481 residues: Deoxyribodipyrimidine photo-lyase (481 aa).

The Photolyase/cryptochrome alpha/beta domain occupies 1–136; sequence MQLFWHRRDL…AHAQFHDAVH (136 aa). Position 228 (Tyr228) interacts with FAD. DNA is bound at residue Arg232. 240–244 contributes to the FAD binding site; the sequence is TSRLS. Interaction with DNA stretches follow at residues 283-290 and 349-350; these read QLAWREFY and NR. 380-382 is a binding site for FAD; sequence DHD. Gln412 is a DNA binding site.

Belongs to the DNA photolyase class-1 family. Monomer. FAD is required as a cofactor. It depends on coenzyme F420-(gamma-Glu)n as a cofactor.

The catalysed reaction is cyclobutadipyrimidine (in DNA) = 2 pyrimidine residues (in DNA).. In terms of biological role, involved in repair of UV radiation-induced DNA damage. Catalyzes the light-dependent monomerization (300-600 nm) of cyclobutyl pyrimidine dimers (in cis-syn configuration), which are formed between adjacent bases on the same DNA strand upon exposure to ultraviolet radiation. In Halobacterium salinarum (strain ATCC 700922 / JCM 11081 / NRC-1) (Halobacterium halobium), this protein is Deoxyribodipyrimidine photo-lyase (phr).